The sequence spans 274 residues: 2,3,4,5-tetrahydropyridine-2,6-dicarboxylate N-succinyltransferase (274 aa).

Residues Arg104 and Asp141 each contribute to the substrate site.

The protein belongs to the transferase hexapeptide repeat family. In terms of assembly, homotrimer.

It is found in the cytoplasm. It carries out the reaction (S)-2,3,4,5-tetrahydrodipicolinate + succinyl-CoA + H2O = (S)-2-succinylamino-6-oxoheptanedioate + CoA. The protein operates within amino-acid biosynthesis; L-lysine biosynthesis via DAP pathway; LL-2,6-diaminopimelate from (S)-tetrahydrodipicolinate (succinylase route): step 1/3. The sequence is that of 2,3,4,5-tetrahydropyridine-2,6-dicarboxylate N-succinyltransferase from Salmonella choleraesuis (strain SC-B67).